The primary structure comprises 242 residues: Ubiquitin-conjugating enzyme E2 6 (242 aa).

Residues 1–217 (MASRQAYKRL…QPAGNGTTSN (217 aa)) are Cytoplasmic-facing. The UBC core domain occupies 5 to 163 (QAYKRLSKEY…FPELAEQNRR (159 aa)). The Glycyl thioester intermediate role is filled by cysteine 87. The helical transmembrane segment at 218–240 (SIGRSLLFVLFSLAALLVAVCYT) threads the bilayer.

The protein belongs to the ubiquitin-conjugating enzyme family.

Its subcellular location is the endoplasmic reticulum membrane. It catalyses the reaction S-ubiquitinyl-[E1 ubiquitin-activating enzyme]-L-cysteine + [E2 ubiquitin-conjugating enzyme]-L-cysteine = [E1 ubiquitin-activating enzyme]-L-cysteine + S-ubiquitinyl-[E2 ubiquitin-conjugating enzyme]-L-cysteine.. It participates in protein modification; protein ubiquitination. In terms of biological role, catalyzes the covalent attachment of ubiquitin to other proteins. Functions in degradation of misfolded or regulated proteins localized in the endoplasmic reticulum (ER) lumen or membrane via the ubiquitin-proteasome system. Cognate E2 conjugating enzyme for the DOA10 ubiquitin ligase complex, which is part of the ERAD-C pathway responsible for the rapid degradation of membrane proteins with misfolded cytoplasmic domains. This Eremothecium gossypii (strain ATCC 10895 / CBS 109.51 / FGSC 9923 / NRRL Y-1056) (Yeast) protein is Ubiquitin-conjugating enzyme E2 6 (UBC6).